The chain runs to 472 residues: Glycosyl hydrolase family 109 protein (472 aa).

A signal peptide (tat-type signal) is located at residues 1–35 (MSQTPAVSRRLLLGSAAATGALATGIGSAAPVAAA). NAD(+) contacts are provided by residues 68-69 (NR), Asp-90, 139-142 (WEFH), His-145, 159-160 (EL), and Asn-188. Residues Tyr-217, Arg-236, 248-251 (YPMH), and Tyr-330 each bind substrate. Position 248 (Tyr-248) interacts with NAD(+).

Belongs to the Gfo/Idh/MocA family. Glycosyl hydrolase 109 subfamily. NAD(+) serves as cofactor. Predicted to be exported by the Tat system. The position of the signal peptide cleavage has not been experimentally proven.

Its function is as follows. Glycosidase. Has no alpha-N-acetylgalactosaminidase activity. This is Glycosyl hydrolase family 109 protein from Streptomyces coelicolor (strain ATCC BAA-471 / A3(2) / M145).